The sequence spans 411 residues: MGSLRAILKNPEDLYPLVKLKLAARHAEKQIPPSPNWGFCYSMLHKVSRSFALVIQQLPVELRDAVCIFYLVLRALDTVEDDTSIPTDVKVPILISFHQHVYDREWHFSCGTKEYKVLMDQFHHVSTAFLELRKHYQQAIEDITMRMGAGMAKFICKEVETTDDYDEYCHYVAGLVGLGLSKLFHASEKEDLASDSLSNSMGLFLQKTNIIRDYLEDINEVPKCRMFWPREIWSKYVNKLEELKYEDNSAKAVQCLNDMVTNALPHVEDCLTYMSALRDPSIFRFCAIPQVMAIGTLAMCYDNIEVFRGVVKMRRGLTAKVIDRTRTIADVYGAFFDFSCMLKSKVNNNDPNATKTLKRLEVILKTCRDSGTLNKRKSYIIRSEPNYSPVLIVVIFIILAIILAQLSGNRS.

Transmembrane regions (helical) follow at residues 281–301 (SIFRFCAIPQVMAIGTLAMCY) and 388–408 (SPVLIVVIFIILAIILAQLSG).

Belongs to the phytoene/squalene synthase family. Requires Mg(2+) as cofactor.

Its subcellular location is the endoplasmic reticulum membrane. It catalyses the reaction 2 (2E,6E)-farnesyl diphosphate + NADPH + H(+) = squalene + 2 diphosphate + NADP(+). The enzyme catalyses 2 (2E,6E)-farnesyl diphosphate + NADH + H(+) = squalene + 2 diphosphate + NAD(+). Its pathway is terpene metabolism; lanosterol biosynthesis; lanosterol from farnesyl diphosphate: step 1/3. The polypeptide is Squalene synthase (Nicotiana benthamiana).